The following is a 428-amino-acid chain: Proline--tRNA ligase (428 aa).

This sequence belongs to the class-II aminoacyl-tRNA synthetase family. ProS type 2 subfamily. In terms of assembly, homodimer.

It is found in the cytoplasm. The catalysed reaction is tRNA(Pro) + L-proline + ATP = L-prolyl-tRNA(Pro) + AMP + diphosphate. Catalyzes the attachment of proline to tRNA(Pro) in a two-step reaction: proline is first activated by ATP to form Pro-AMP and then transferred to the acceptor end of tRNA(Pro). This Rickettsia typhi (strain ATCC VR-144 / Wilmington) protein is Proline--tRNA ligase.